We begin with the raw amino-acid sequence, 351 residues long: uncharacterized protein (351 aa).

Residues 1-27 form the signal peptide; it reads MKNKKRVLIASSLSCAILLLSAATTQA. A disordered region spans residues 27–71; the sequence is ANSAHKDSQDQNKKEHVDKSQQKDKRNVTNKDKNSTAPDDIGKNG. Over residues 30-60 the composition is skewed to basic and acidic residues; that stretch reads AHKDSQDQNKKEHVDKSQQKDKRNVTNKDKN.

The protein belongs to the aerolysin family.

This is an uncharacterized protein from Staphylococcus aureus (strain USA300).